We begin with the raw amino-acid sequence, 439 residues long: Vacuolar protein sorting-associated protein 4 (439 aa).

Residues 8–75 enclose the MIT domain; it reads LSKGIDLVQK…TRAEQLKDHL (68 aa). A disordered region spans residues 76 to 113; it reads EKQAQNKSTAESSVNGSTKAKKSNGDGNGSGDDNDDAD. Polar residues predominate over residues 80 to 93; it reads QNKSTAESSVNGST. Position 175–182 (175–182) interacts with ATP; it reads GPPGTGKS.

This sequence belongs to the AAA ATPase family. As to quaternary structure, monomer or homodimer (in nucleotide-free form). Decamer, dodecamer or tetradecamer of two stacked respective homooligomeric rings (when bound to ATP); the dodecameric form seems to be predominant.

The protein localises to the endosome membrane. Its function is as follows. Pre-vacuolar protein sorting protein involved in the transport of biosynthetic membrane proteins from the prevacuolar/endosomal compartment to the vacuole. Required for multivesicular body (MVB) protein sorting. Catalyzes the ATP-dependent dissociation of class E VPS proteins from endosomal membranes, such as the disassembly of the ESCRT-III complex. Required for extracellular secretion of the secreted aspartyl proteases SAP2, SAP4, SAP5, and SAP6. Its regulation of the pre-vacuolar secretory pathway is critical for virulence. This Candida albicans (strain SC5314 / ATCC MYA-2876) (Yeast) protein is Vacuolar protein sorting-associated protein 4.